We begin with the raw amino-acid sequence, 428 residues long: Phosphoribosylamine--glycine ligase (428 aa).

Residues K109 to D316 form the ATP-grasp domain. L135 to S196 is an ATP binding site. A disordered region spans residues S211–P235. Basic and acidic residues predominate over residues Q213–R223. Mg(2+) is bound by residues E286 and N288.

Belongs to the GARS family. Requires Mg(2+) as cofactor. Mn(2+) serves as cofactor.

It carries out the reaction 5-phospho-beta-D-ribosylamine + glycine + ATP = N(1)-(5-phospho-beta-D-ribosyl)glycinamide + ADP + phosphate + H(+). It functions in the pathway purine metabolism; IMP biosynthesis via de novo pathway; N(1)-(5-phospho-D-ribosyl)glycinamide from 5-phospho-alpha-D-ribose 1-diphosphate: step 2/2. In Allochromatium vinosum (strain ATCC 17899 / DSM 180 / NBRC 103801 / NCIMB 10441 / D) (Chromatium vinosum), this protein is Phosphoribosylamine--glycine ligase (purD).